The chain runs to 367 residues: Ferrochelatase (367 aa).

Fe cation-binding residues include His226 and Glu307.

It belongs to the ferrochelatase family.

The protein localises to the cytoplasm. The enzyme catalyses heme b + 2 H(+) = protoporphyrin IX + Fe(2+). The protein operates within porphyrin-containing compound metabolism; protoheme biosynthesis; protoheme from protoporphyrin-IX: step 1/1. Functionally, catalyzes the ferrous insertion into protoporphyrin IX. This Burkholderia mallei (strain NCTC 10247) protein is Ferrochelatase.